Here is a 131-residue protein sequence, read N- to C-terminus: 14.7 kDa heat shock protein (131 aa).

Residues 1–11 are compositionally biased toward polar residues; that stretch reads MSRNMEVNAGS. The segment at 1–20 is disordered; that stretch reads MSRNMEVNAGSSGEIPSPIR. One can recognise a sHSP domain in the interval 22 to 131; that stretch reads RFQKSGSQAV…INVKERILHY (110 aa).

Belongs to the small heat shock protein (HSP20) family. May form oligomeric structures.

It is found in the cytoplasm. This chain is 14.7 kDa heat shock protein (HSP14.7), found in Arabidopsis thaliana (Mouse-ear cress).